A 184-amino-acid polypeptide reads, in one-letter code: ATP synthase subunit b (184 aa).

Residues Ile-24–Pro-44 traverse the membrane as a helical segment.

This sequence belongs to the ATPase B chain family. F-type ATPases have 2 components, F(1) - the catalytic core - and F(0) - the membrane proton channel. F(1) has five subunits: alpha(3), beta(3), gamma(1), delta(1), epsilon(1). F(0) has three main subunits: a(1), b(2) and c(10-14). The alpha and beta chains form an alternating ring which encloses part of the gamma chain. F(1) is attached to F(0) by a central stalk formed by the gamma and epsilon chains, while a peripheral stalk is formed by the delta and b chains.

It localises to the cell membrane. F(1)F(0) ATP synthase produces ATP from ADP in the presence of a proton or sodium gradient. F-type ATPases consist of two structural domains, F(1) containing the extramembraneous catalytic core and F(0) containing the membrane proton channel, linked together by a central stalk and a peripheral stalk. During catalysis, ATP synthesis in the catalytic domain of F(1) is coupled via a rotary mechanism of the central stalk subunits to proton translocation. Functionally, component of the F(0) channel, it forms part of the peripheral stalk, linking F(1) to F(0). The protein is ATP synthase subunit b (atpF) of Micrococcus luteus (strain ATCC 4698 / DSM 20030 / JCM 1464 / CCM 169 / CCUG 5858 / IAM 1056 / NBRC 3333 / NCIMB 9278 / NCTC 2665 / VKM Ac-2230) (Micrococcus lysodeikticus).